The sequence spans 271 residues: Beta-lysine N(6)-acetyltransferase (271 aa).

The disordered stretch occupies residues 86–122; the sequence is LRKDRGTGKNQKKKKISRKKDNWKKRKEKSRLPEGYT. Positions 95–114 are enriched in basic residues; that stretch reads NQKKKKISRKKDNWKKRKEK. One can recognise an N-acetyltransferase domain in the interval 121–269; sequence YTLRPAVQAD…GFEDMNIWCR (149 aa).

This sequence belongs to the acetyltransferase family.

The catalysed reaction is (3S)-3,6-diaminohexanoate + acetyl-CoA = (3S)-6-acetamido-3-aminohexanoate + CoA + H(+). In terms of biological role, catalyzes the acetylation of beta-lysine to N6-acetyl-beta-lysine, a compatible solute produced by methanogenic archaea that helps cells to cope with salt stress. This chain is Beta-lysine N(6)-acetyltransferase, found in Methanosarcina mazei (strain ATCC BAA-159 / DSM 3647 / Goe1 / Go1 / JCM 11833 / OCM 88) (Methanosarcina frisia).